Here is a 498-residue protein sequence, read N- to C-terminus: ATP synthase subunit beta, chloroplastic (498 aa).

Position 172–179 (172–179 (GGAGVGKT)) interacts with ATP.

It belongs to the ATPase alpha/beta chains family. As to quaternary structure, F-type ATPases have 2 components, CF(1) - the catalytic core - and CF(0) - the membrane proton channel. CF(1) has five subunits: alpha(3), beta(3), gamma(1), delta(1), epsilon(1). CF(0) has four main subunits: a(1), b(1), b'(1) and c(9-12).

Its subcellular location is the plastid. The protein resides in the chloroplast thylakoid membrane. The catalysed reaction is ATP + H2O + 4 H(+)(in) = ADP + phosphate + 5 H(+)(out). Functionally, produces ATP from ADP in the presence of a proton gradient across the membrane. The catalytic sites are hosted primarily by the beta subunits. The protein is ATP synthase subunit beta, chloroplastic of Aristolochia macrophylla (Dutchman's pipe vine).